We begin with the raw amino-acid sequence, 233 residues long: Small ribosomal subunit protein uS2 (233 aa).

The protein belongs to the universal ribosomal protein uS2 family.

In Prochlorococcus marinus (strain MIT 9312), this protein is Small ribosomal subunit protein uS2.